Consider the following 207-residue polypeptide: Ubiquinol-cytochrome c reductase iron-sulfur subunit (207 aa).

Residues 24–44 form a helical membrane-spanning segment; it reads LVAATSVVGAVGAGYALVPFV. The Rieske domain occupies 100-199; that stretch reads PKLVDPTSEV…HVYLNDTTIL (100 aa). 4 residues coordinate [2Fe-2S] cluster: Cys134, His136, Cys162, and His165. A disulfide bridge connects residues Cys139 and Cys164.

As to quaternary structure, the main subunits of complex b-c1 are: cytochrome b, cytochrome c1 and the Rieske protein. [2Fe-2S] cluster serves as cofactor.

The protein localises to the cell membrane. It catalyses the reaction a quinol + 2 Fe(III)-[cytochrome c](out) = a quinone + 2 Fe(II)-[cytochrome c](out) + 2 H(+)(out). In terms of biological role, component of the ubiquinol-cytochrome c reductase complex (complex III or cytochrome b-c1 complex), which is a respiratory chain that generates an electrochemical potential coupled to ATP synthesis. The sequence is that of Ubiquinol-cytochrome c reductase iron-sulfur subunit (petA) from Allochromatium vinosum (strain ATCC 17899 / DSM 180 / NBRC 103801 / NCIMB 10441 / D) (Chromatium vinosum).